The primary structure comprises 403 residues: Glucose/galactose-binding lipoprotein (403 aa).

Positions 1–25 (MKENSCTACSRRLALFVGAAVLVVG) are cleaved as a signal peptide. Cysteine 26 carries the N-palmitoyl cysteine lipid modification. Cysteine 26 carries the S-diacylglycerol cysteine lipid modification.

Belongs to the bacterial solute-binding protein 2 family.

The protein localises to the cell membrane. Its function is as follows. May be involved in the transport of sugars. May have a role in chemotaxis. This Treponema pallidum (strain Nichols) protein is Glucose/galactose-binding lipoprotein (mglB).